A 365-amino-acid polypeptide reads, in one-letter code: Ribosomal RNA large subunit methyltransferase M (365 aa).

Residues serine 193, 226–229 (CPGG), aspartate 245, aspartate 265, and aspartate 282 contribute to the S-adenosyl-L-methionine site. Lysine 311 acts as the Proton acceptor in catalysis.

It belongs to the class I-like SAM-binding methyltransferase superfamily. RNA methyltransferase RlmE family. RlmM subfamily. As to quaternary structure, monomer.

The protein resides in the cytoplasm. The catalysed reaction is cytidine(2498) in 23S rRNA + S-adenosyl-L-methionine = 2'-O-methylcytidine(2498) in 23S rRNA + S-adenosyl-L-homocysteine + H(+). Catalyzes the 2'-O-methylation at nucleotide C2498 in 23S rRNA. This is Ribosomal RNA large subunit methyltransferase M from Alteromonas mediterranea (strain DSM 17117 / CIP 110805 / LMG 28347 / Deep ecotype).